Consider the following 190-residue polypeptide: Holliday junction branch migration complex subunit RuvA (190 aa).

The domain I stretch occupies residues 1-65; sequence MIGNLSGIVD…ENVAQLYGFI (65 aa). A domain II region spans residues 66–143; it reads SKEEQQCLRL…KLEINNNNFH (78 aa). Residues 144 to 147 are flexible linker; that stretch reads PINE. Residues 147 to 190 are domain III; the sequence is EDALSALINLGYEKMKAYDTIKKYRPNLDTKDIIRMALKELSIL.

This sequence belongs to the RuvA family. As to quaternary structure, homotetramer. Forms an RuvA(8)-RuvB(12)-Holliday junction (HJ) complex. HJ DNA is sandwiched between 2 RuvA tetramers; dsDNA enters through RuvA and exits via RuvB. An RuvB hexamer assembles on each DNA strand where it exits the tetramer. Each RuvB hexamer is contacted by two RuvA subunits (via domain III) on 2 adjacent RuvB subunits; this complex drives branch migration. In the full resolvosome a probable DNA-RuvA(4)-RuvB(12)-RuvC(2) complex forms which resolves the HJ.

It is found in the cytoplasm. Functionally, the RuvA-RuvB-RuvC complex processes Holliday junction (HJ) DNA during genetic recombination and DNA repair, while the RuvA-RuvB complex plays an important role in the rescue of blocked DNA replication forks via replication fork reversal (RFR). RuvA specifically binds to HJ cruciform DNA, conferring on it an open structure. The RuvB hexamer acts as an ATP-dependent pump, pulling dsDNA into and through the RuvAB complex. HJ branch migration allows RuvC to scan DNA until it finds its consensus sequence, where it cleaves and resolves the cruciform DNA. The protein is Holliday junction branch migration complex subunit RuvA of Wolbachia pipientis wMel.